Reading from the N-terminus, the 433-residue chain is tRNA(Ile)-lysidine synthase (433 aa).

An ATP-binding site is contributed by 27–32 (SGGLDS).

This sequence belongs to the tRNA(Ile)-lysidine synthase family.

The protein localises to the cytoplasm. It catalyses the reaction cytidine(34) in tRNA(Ile2) + L-lysine + ATP = lysidine(34) in tRNA(Ile2) + AMP + diphosphate + H(+). Functionally, ligates lysine onto the cytidine present at position 34 of the AUA codon-specific tRNA(Ile) that contains the anticodon CAU, in an ATP-dependent manner. Cytidine is converted to lysidine, thus changing the amino acid specificity of the tRNA from methionine to isoleucine. This is tRNA(Ile)-lysidine synthase from Legionella pneumophila subsp. pneumophila (strain Philadelphia 1 / ATCC 33152 / DSM 7513).